Consider the following 151-residue polypeptide: Ribosomal RNA large subunit methyltransferase H (151 aa).

Residues Gly-100 and 119–124 (LSKMTF) each bind S-adenosyl-L-methionine.

Belongs to the RNA methyltransferase RlmH family. Homodimer.

The protein resides in the cytoplasm. It carries out the reaction pseudouridine(1915) in 23S rRNA + S-adenosyl-L-methionine = N(3)-methylpseudouridine(1915) in 23S rRNA + S-adenosyl-L-homocysteine + H(+). Functionally, specifically methylates the pseudouridine at position 1915 (m3Psi1915) in 23S rRNA. This Thermotoga maritima (strain ATCC 43589 / DSM 3109 / JCM 10099 / NBRC 100826 / MSB8) protein is Ribosomal RNA large subunit methyltransferase H.